The sequence spans 199 residues: Recombination protein RecR (199 aa).

The segment at 57 to 72 (CSICGNITESDPCMIC) adopts a C4-type zinc-finger fold. A Toprim domain is found at 80-176 (SKVVVVEQPK…KVTRLAHGLA (97 aa)).

Belongs to the RecR family.

In terms of biological role, may play a role in DNA repair. It seems to be involved in an RecBC-independent recombinational process of DNA repair. It may act with RecF and RecO. The sequence is that of Recombination protein RecR from Ligilactobacillus salivarius (strain UCC118) (Lactobacillus salivarius).